The primary structure comprises 172 residues: ATP synthase subunit b (172 aa).

A helical membrane pass occupies residues 5 to 24 (LLMLLLLGSVSLFANEAAAS).

This sequence belongs to the ATPase B chain family. In terms of assembly, F-type ATPases have 2 components, F(1) - the catalytic core - and F(0) - the membrane proton channel. F(1) has five subunits: alpha(3), beta(3), gamma(1), delta(1), epsilon(1). F(0) has three main subunits: a(1), b(2) and c(10-14). The alpha and beta chains form an alternating ring which encloses part of the gamma chain. F(1) is attached to F(0) by a central stalk formed by the gamma and epsilon chains, while a peripheral stalk is formed by the delta and b chains.

The protein resides in the cell inner membrane. Its function is as follows. F(1)F(0) ATP synthase produces ATP from ADP in the presence of a proton or sodium gradient. F-type ATPases consist of two structural domains, F(1) containing the extramembraneous catalytic core and F(0) containing the membrane proton channel, linked together by a central stalk and a peripheral stalk. During catalysis, ATP synthesis in the catalytic domain of F(1) is coupled via a rotary mechanism of the central stalk subunits to proton translocation. Functionally, component of the F(0) channel, it forms part of the peripheral stalk, linking F(1) to F(0). This is ATP synthase subunit b from Nitratiruptor sp. (strain SB155-2).